Reading from the N-terminus, the 91-residue chain is Small ribosomal subunit protein uS19 (91 aa).

The protein belongs to the universal ribosomal protein uS19 family.

Functionally, protein S19 forms a complex with S13 that binds strongly to the 16S ribosomal RNA. This chain is Small ribosomal subunit protein uS19, found in Aromatoleum aromaticum (strain DSM 19018 / LMG 30748 / EbN1) (Azoarcus sp. (strain EbN1)).